The primary structure comprises 700 residues: MARKTPIERYRNIGISAHIDAGKTTTTERILFYTGVNHKIGEVHDGAATMDWMEQEQERGITITSAATTCFWKGMELAFPEHRINIIDTPGHVDFTIEVERSMRVLDGACMVYCAVGGVQPQSETVWRQANKYKVPRLAFVNKMDRTGANFYKVYDQMKVRLKANPVPIVLPIGAEENFTGVIDLIKMKAIIWDEASQGMKFNYEDIPADLQAESQKWRENMVEAAAEASEELMNKYLESGELTEAEIKFGIRTRTIAAEIQPMFCGTAFKNKGVQRMLDGVIDFMPSPIDIPPVPGHDDDDKEVVRRAADDEKFAALAFKLMTDPYVGQLTFVRVYSGVLKSGDSVFNPIRGKKERIGRILQMHANQREEIKEILAGDIAACVGLKEVTTGETLCDPDAIITLEKMIFPEPVISQAVEPKTKADQEKMGIALGRLAQEDPSFRVRTDEESGQTIISGMGELHLEIIVDRMKREFGVEANVGKPQVAYRETIRKPVSDIEGKFVRQSGGKGQYGHVVLKIEPQEPGKGFEFVDAIKGGVVPREFIPAVKKGVEDSLPNGVLAGFPVVDVKVTLTFGSYHEVDSNENAFKMAASLGFKDGCRKASPVILEPMMAVEVETPEDYAGNVMGDLSSRRGMVQGMDDMPGGGKAIKAEVPLSEMFGYSTTLRSMSQGRATYTMEFKHYSEAPKNVADAIITSRAK.

One can recognise a tr-type G domain in the interval 8-290 (ERYRNIGISA…GVIDFMPSPI (283 aa)). GTP contacts are provided by residues 17–24 (AHIDAGKT), 88–92 (DTPGH), and 142–145 (NKMD).

The protein belongs to the TRAFAC class translation factor GTPase superfamily. Classic translation factor GTPase family. EF-G/EF-2 subfamily.

It is found in the cytoplasm. In terms of biological role, catalyzes the GTP-dependent ribosomal translocation step during translation elongation. During this step, the ribosome changes from the pre-translocational (PRE) to the post-translocational (POST) state as the newly formed A-site-bound peptidyl-tRNA and P-site-bound deacylated tRNA move to the P and E sites, respectively. Catalyzes the coordinated movement of the two tRNA molecules, the mRNA and conformational changes in the ribosome. The chain is Elongation factor G from Methylibium petroleiphilum (strain ATCC BAA-1232 / LMG 22953 / PM1).